The chain runs to 276 residues: Putative oxidoreductase SadH (276 aa).

Position 142 (Ser-142) interacts with substrate. Residue Tyr-155 is the Proton acceptor of the active site.

It belongs to the short-chain dehydrogenases/reductases (SDR) family.

Required for maintaining the appropriate mycolic acid composition and permeability of the envelope on its exposure to acidic pH. The polypeptide is Putative oxidoreductase SadH (sadH) (Mycobacterium tuberculosis (strain CDC 1551 / Oshkosh)).